Consider the following 444-residue polypeptide: CCA-adding enzyme (444 aa).

S57 and R60 together coordinate ATP. CTP is bound by residues S57 and R60. Residues D69, D71, and D124 each coordinate Mg(2+). ATP-binding residues include H147, K168, and Y177. CTP-binding residues include H147, K168, and Y177.

This sequence belongs to the tRNA nucleotidyltransferase/poly(A) polymerase family. Archaeal CCA-adding enzyme subfamily. As to quaternary structure, homodimer. It depends on Mg(2+) as a cofactor.

It carries out the reaction a tRNA precursor + 2 CTP + ATP = a tRNA with a 3' CCA end + 3 diphosphate. It catalyses the reaction a tRNA with a 3' CCA end + 2 CTP + ATP = a tRNA with a 3' CCACCA end + 3 diphosphate. Catalyzes the addition and repair of the essential 3'-terminal CCA sequence in tRNAs without using a nucleic acid template. Adds these three nucleotides in the order of C, C, and A to the tRNA nucleotide-73, using CTP and ATP as substrates and producing inorganic pyrophosphate. tRNA 3'-terminal CCA addition is required both for tRNA processing and repair. Also involved in tRNA surveillance by mediating tandem CCA addition to generate a CCACCA at the 3' terminus of unstable tRNAs. While stable tRNAs receive only 3'-terminal CCA, unstable tRNAs are marked with CCACCA and rapidly degraded. This Methanococcus maripaludis (strain C5 / ATCC BAA-1333) protein is CCA-adding enzyme.